Here is a 534-residue protein sequence, read N- to C-terminus: EH domain-containing protein 1 (534 aa).

Met-1 carries the post-translational modification N-acetylmethionine. One can recognise a Dynamin-type G domain in the interval 55–286; sequence FDNKPMVLLV…DLFKDIQSLP (232 aa). Positions 65–72 are G1 motif; the sequence is GQYSTGKT. 65–72 serves as a coordination point for ATP; the sequence is GQYSTGKT. The segment at 91-92 is G2 motif; that stretch reads EP. The interval 153-156 is G3 motif; the sequence is DTPG. Positions 198-227 form a coiled coil; the sequence is DEFSEVIKALKNHEDKIRVVLNKADQIETQ. The tract at residues 219–222 is G4 motif; sequence NKAD. Lys-220 contributes to the ATP binding site. Residue Ile-243 is a region of interest, G5 motif. ATP is bound at residue Trp-258. Residues Ser-355 and Ser-456 each carry the phosphoserine modification. One can recognise an EH domain in the interval 444–532; sequence DKPTYDEIFY…PHLVPPSKRR (89 aa). The region spanning 476 to 511 is the EF-hand domain; sequence LPNTVLGKIWKLADVDKDGLLDDEEFALANHLIKVK. Residues Asp-489, Asp-491, Asp-493, and Glu-500 each coordinate Ca(2+).

This sequence belongs to the TRAFAC class dynamin-like GTPase superfamily. Dynamin/Fzo/YdjA family. EHD subfamily. As to quaternary structure, homooligomer, and heterooligomer with EHD2, EHD3 and EHD4, ATP-binding is required for heterooligomerization. Interacts (via EH domain) with MICALL1 (via NPF1 motif); the interaction is direct and recruits EHD1 to membranes. Interacts with RAB35; the interaction is indirect through MICALL1 and recruits EHD1 to membranes. Interacts (via EH domain) with PACSIN2 (via NPF motifs); regulates localization to tubular recycling endosome membranes. Interacts with PACSIN1. Interacts with RAB8A. Interacts with FER1L5 (via second C2 domain). Interacts with MYOF. Interacts with ZFYVE20. Interacts (via EH domain) with RAB11FIP2.

The protein resides in the recycling endosome membrane. It localises to the early endosome membrane. The protein localises to the cell membrane. Its subcellular location is the cell projection. It is found in the cilium membrane. Functionally, ATP- and membrane-binding protein that controls membrane reorganization/tubulation upon ATP hydrolysis. Acts in early endocytic membrane fusion and membrane trafficking of recycling endosomes. Recruited to endosomal membranes upon nerve growth factor stimulation, indirectly regulates neurite outgrowth. Plays a role in myoblast fusion. Involved in the unidirectional retrograde dendritic transport of endocytosed BACE1 and in efficient sorting of BACE1 to axons implicating a function in neuronal APP processing. Plays a role in the formation of the ciliary vesicle (CV), an early step in cilium biogenesis. Proposed to be required for the fusion of distal appendage vesicles (DAVs) to form the CV by recruiting SNARE complex component SNAP29. Is required for recruitment of transition zone proteins CEP290, RPGRIP1L, TMEM67 and B9D2, and of IFT20 following DAV reorganization before Rab8-dependent ciliary membrane extension. Required for the loss of CCP110 form the mother centriole essential for the maturation of the basal body during ciliogenesis. The chain is EH domain-containing protein 1 from Pongo abelii (Sumatran orangutan).